The sequence spans 122 residues: UPF0145 protein BamMC406_5002 (122 aa).

It belongs to the UPF0145 family.

This chain is UPF0145 protein BamMC406_5002, found in Burkholderia ambifaria (strain MC40-6).